The sequence spans 189 residues: Peptidyl-tRNA hydrolase (189 aa).

His15 is a binding site for tRNA. His20 serves as the catalytic Proton acceptor. TRNA contacts are provided by Phe66, Asn68, and Asn114.

Belongs to the PTH family. Monomer.

It localises to the cytoplasm. The enzyme catalyses an N-acyl-L-alpha-aminoacyl-tRNA + H2O = an N-acyl-L-amino acid + a tRNA + H(+). Its function is as follows. Hydrolyzes ribosome-free peptidyl-tRNAs (with 1 or more amino acids incorporated), which drop off the ribosome during protein synthesis, or as a result of ribosome stalling. In terms of biological role, catalyzes the release of premature peptidyl moieties from peptidyl-tRNA molecules trapped in stalled 50S ribosomal subunits, and thus maintains levels of free tRNAs and 50S ribosomes. The polypeptide is Peptidyl-tRNA hydrolase (Streptococcus equi subsp. equi (strain 4047)).